The sequence spans 459 residues: MIGDDIAAISTAPGEGGIAIVRLSGNDVIEKVERIFKPYRAGIKLSDKEGYSLSLGWLCDEKMEIIDEVLLGLMRAPRSYTGEDVVEINCHGGTLPARRCLEAVMWQGVRLAQPGEFTRRAFLNGRLDVSQAEAVIEVIRAKTERGMNLALKQLAGRNSQEINLLEDQMIEVNAMLEASLDFPDEVGDLDYSAAQGKLQEVKNRIDKLLLAGERAEIYREGINVAICGKPNVGKSSLLNALLRKEKAIVTSIPGTTRDIIEDYINIRGIPVKLKDTAGIRSTEDLVERIGIERSQEVISEADLVLFILDVGTGIDQEDRKIYEKIEKKNKIVLVNKEDLEEKNISEAELEQLFPGVKIVRGSIIEETGLEELEESIEKAVLSGQLQSDDMEVMINLRQKNALLTAKRHIEESLAAMGKVSLDCLGVDIWGALEALGEISGKNLKEEVIERIFHDFCIGK.

Positions 22, 87, and 126 each coordinate (6S)-5-formyl-5,6,7,8-tetrahydrofolate. In terms of domain architecture, TrmE-type G spans 221 to 381 (GINVAICGKP…LEESIEKAVL (161 aa)). K(+) is bound at residue asparagine 231. GTP is bound by residues 231-236 (NVGKSS), 250-256 (TSIPGTT), and 275-278 (DTAG). Serine 235 is a binding site for Mg(2+). Residues threonine 250, isoleucine 252, and threonine 255 each contribute to the K(+) site. Threonine 256 is a binding site for Mg(2+). Lysine 459 provides a ligand contact to (6S)-5-formyl-5,6,7,8-tetrahydrofolate.

It belongs to the TRAFAC class TrmE-Era-EngA-EngB-Septin-like GTPase superfamily. TrmE GTPase family. In terms of assembly, homodimer. Heterotetramer of two MnmE and two MnmG subunits. K(+) serves as cofactor.

It localises to the cytoplasm. Its function is as follows. Exhibits a very high intrinsic GTPase hydrolysis rate. Involved in the addition of a carboxymethylaminomethyl (cmnm) group at the wobble position (U34) of certain tRNAs, forming tRNA-cmnm(5)s(2)U34. This Syntrophomonas wolfei subsp. wolfei (strain DSM 2245B / Goettingen) protein is tRNA modification GTPase MnmE.